The chain runs to 142 residues: HTH-type transcriptional regulator MntR (142 aa).

Positions 1–63 (MPTPSMEDYI…YEKYRGLVLT (63 aa)) constitute an HTH dtxR-type domain. Asp8, Glu11, His77, Glu99, Glu102, and His103 together coordinate Mn(2+).

The protein belongs to the DtxR/MntR family. Homodimer.

The protein resides in the cytoplasm. With respect to regulation, DNA binding is strongly activated by Mn(2+). In terms of biological role, central regulator of manganese homeostasis. The polypeptide is HTH-type transcriptional regulator MntR (Bacillus mycoides (strain KBAB4) (Bacillus weihenstephanensis)).